A 750-amino-acid polypeptide reads, in one-letter code: (13E)-labda-7,13-dien-15-ol synthase (750 aa).

Residues D284, D286, D501, D505, N647, T651, and E655 each contribute to the Mg(2+) site. The DXDD motif motif lies at D284–D287. Positions D501–D505 match the DDXXD motif motif.

The protein belongs to the terpene synthase family. Mg(2+) serves as cofactor.

The enzyme catalyses geranylgeranyl diphosphate + H2O = (13E)-labda-7,13-dien-15-ol + diphosphate. It functions in the pathway secondary metabolite biosynthesis; terpenoid biosynthesis. Bifunctional diterpene synthase that directly generates the endocyclic double bond, as well as the hydroxyl group: produces an endocyclic double bond isomer of copalyl diphosphate (CPP), and carries out subsequent replacement of the diphosphate by a hydroxyl group to form (13E)-labda-7,13-dien-15-ol. The protein is (13E)-labda-7,13-dien-15-ol synthase of Selaginella moellendorffii (Spikemoss).